Reading from the N-terminus, the 71-residue chain is Prokaryotic ubiquitin-like protein Pup (71 aa).

Basic and acidic residues predominate over residues 1-18; that stretch reads MPEKDTGGQHRATRRTEE. The disordered stretch occupies residues 1-36; the sequence is MPEKDTGGQHRATRRTEEHDETIDEATATSDVQERR. An ARC ATPase binding region spans residues 27-65; that stretch reads TATSDVQERREKLDADVDAILDEIDDVLEENAEEFVRSY. Residues 30 to 59 are a coiled coil; it reads SDVQERREKLDADVDAILDEIDDVLEENAE. An Isoglutamyl lysine isopeptide (Glu-Lys) (interchain with K-? in acceptor proteins) cross-link involves residue E71.

It belongs to the prokaryotic ubiquitin-like protein family. Strongly interacts with the proteasome-associated ATPase ARC through a hydrophobic interface; the interacting region of Pup lies in its C-terminal half. There is one Pup binding site per ARC hexamer ring.

Its pathway is protein degradation; proteasomal Pup-dependent pathway. In terms of biological role, protein modifier that is covalently attached to lysine residues of substrate proteins, thereby targeting them for proteasomal degradation. The tagging system is termed pupylation. This Acidothermus cellulolyticus (strain ATCC 43068 / DSM 8971 / 11B) protein is Prokaryotic ubiquitin-like protein Pup.